The chain runs to 407 residues: Substance-P receptor (407 aa).

At Met1–Gln31 the chain is on the extracellular side. Residues Asn14 and Asn18 are each glycosylated (N-linked (GlcNAc...) asparagine). The helical transmembrane segment at Ile32–Met54 threads the bilayer. At Trp55–Arg64 the chain is on the cytoplasmic side. Residues Thr65–Thr86 form a helical membrane-spanning segment. The Extracellular segment spans residues Val87–Lys106. An intrachain disulfide couples Cys105 to Cys180. The chain crosses the membrane as a helical span at residues Phe107 to Phe128. The Cytoplasmic portion of the chain corresponds to Asp129–Lys148. Residues Val149–Ser169 form a helical membrane-spanning segment. The Extracellular portion of the chain corresponds to Thr170–Lys194. A helical membrane pass occupies residues Val195–Val219. Topologically, residues Gly220–Lys248 are cytoplasmic. The chain crosses the membrane as a helical span at residues Met249–Leu270. Over Pro271 to Ile283 the chain is Extracellular. Residues Gln284–Leu308 traverse the membrane as a helical segment. The Cytoplasmic portion of the chain corresponds to Asn309–Ser407. The S-palmitoyl cysteine moiety is linked to residue Cys322. A disordered region spans residues His365–Thr394. The span at Thr375 to Thr394 shows a compositional bias: polar residues.

The protein belongs to the G-protein coupled receptor 1 family. Interacts with ARRB1.

It is found in the cell membrane. Its function is as follows. This is a receptor for the tachykinin neuropeptide substance P. It is probably associated with G proteins that activate a phosphatidylinositol-calcium second messenger system. The polypeptide is Substance-P receptor (TACR1) (Canis lupus familiaris (Dog)).